The chain runs to 134 residues: Small ribosomal subunit protein uS11 (134 aa).

The segment at 1–21 is disordered; sequence MPPKSRQGAGRKVRRKEKKNV. A compositionally biased stretch (basic residues) spans 9–21; that stretch reads AGRKVRRKEKKNV.

It belongs to the universal ribosomal protein uS11 family. In terms of assembly, part of the 30S ribosomal subunit. Interacts with proteins S7 and S18. Binds to IF-3.

In terms of biological role, located on the platform of the 30S subunit, it bridges several disparate RNA helices of the 16S rRNA. Forms part of the Shine-Dalgarno cleft in the 70S ribosome. In Thermobifida fusca (strain YX), this protein is Small ribosomal subunit protein uS11.